The primary structure comprises 329 residues: Putative HTH-type transcriptional regulatory protein APE_0778 (329 aa).

The region spanning 142–200 (LREKRLEKGLSLGHLAYMLKTSRKSIYEYERGVMSPSVEKAEKLVDILGEEILEPIDIL) is the HTH cro/C1-type domain. Residues 153-172 (LGHLAYMLKTSRKSIYEYER) constitute a DNA-binding region (H-T-H motif).

This is Putative HTH-type transcriptional regulatory protein APE_0778 from Aeropyrum pernix (strain ATCC 700893 / DSM 11879 / JCM 9820 / NBRC 100138 / K1).